Consider the following 123-residue polypeptide: Highly acidic elicitin 20 (123 aa).

Positions 1–20 (MQFTALFAATAVALVGSVSA) are cleaved as a signal peptide. Disulfide bonds link cysteine 23–cysteine 91, cysteine 47–cysteine 76, and cysteine 71–cysteine 115.

The protein belongs to the elicitin family.

It localises to the secreted. In terms of biological role, induces local and distal defense responses (incompatible hypersensitive reaction) in plants from the solanaceae and cruciferae families. Elicits leaf necrosis and causes the accumulation of pathogenesis-related proteins. Might interact with the lipidic molecules of the plasma membrane. The chain is Highly acidic elicitin 20 (B20) from Phytophthora cryptogea.